The following is a 184-amino-acid chain: Transmembrane protein 140 (184 aa).

Topologically, residues 1–12 are cytoplasmic; it reads MAISRVWRNRLS. A helical membrane pass occupies residues 13-33; it reads FMAIMILVAMVLSLMSYALLW. At 34–83 the chain is on the extracellular side; sequence KAGNLTDVPNLRIGFYNFCLWKEDIGSLECYNFPELGVLGIPQVGLALAR. An N-linked (GlcNAc...) asparagine glycan is attached at N37. The chain crosses the membrane as a helical span at residues 84–104; sequence LGVYGALVLAVFVPLPLLLAQ. The Cytoplasmic segment spans residues 105–117; sequence CNSDEGEWRLAVG. The chain crosses the membrane as a helical span at residues 118–138; that stretch reads FLGASSVLLAGGLSLFLFLVW. The Extracellular portion of the chain corresponds to 139-149; that stretch reads KWLRLSFLGPG. Residues 150–170 form a helical membrane-spanning segment; sequence FLSLCLAQALLIILLMAMVMF. The Cytoplasmic segment spans residues 171–184; that stretch reads PPRDKKDKNHWENC.

It is found in the membrane. The polypeptide is Transmembrane protein 140 (Tmem140) (Rattus norvegicus (Rat)).